A 471-amino-acid chain; its full sequence is Putative multidrug resistance protein MdtD (471 aa).

The Periplasmic segment spans residues 1-11; it reads MTDLPDSTRWQ. Residues 12–32 form a helical membrane-spanning segment; it reads LWIVAFGFFMQSLDTTIVNTA. At 33–48 the chain is on the cytoplasmic side; the sequence is LPSMAQSLGESPLHMH. The chain crosses the membrane as a helical span at residues 49–69; it reads MVIVSYVLTVAVMLPASGWLA. Topologically, residues 70 to 76 are periplasmic; that stretch reads DKVGVRN. A helical transmembrane segment spans residues 77 to 97; the sequence is IFFTAIVLFTLGSLFCALSGT. At 98–101 the chain is on the cytoplasmic side; it reads LNEL. A helical membrane pass occupies residues 102 to 124; that stretch reads LLARALQGVGGAMMVPVGRLTVM. Residues 125–137 are Periplasmic-facing; the sequence is KIVPREQYMAAMT. The helical transmembrane segment at 138-158 threads the bilayer; the sequence is FVTLPGQVGPLLGPALGGLLV. Residues 159 to 164 lie on the Cytoplasmic side of the membrane; that stretch reads EYASWH. Residues 165-185 traverse the membrane as a helical segment; that stretch reads WIFLINIPVGIIGAIATLMLM. The Periplasmic segment spans residues 186–196; sequence PNYTMQTRRFD. Residues 197 to 217 traverse the membrane as a helical segment; the sequence is LSGFLLLAVGMAVLTLALDGS. Residues 218–224 lie on the Cytoplasmic side of the membrane; that stretch reads KGTGLSP. Residues 225–245 traverse the membrane as a helical segment; the sequence is LAITGLVAVGVVALVLYLLHA. Residues 246–262 are Periplasmic-facing; sequence RNNHRALFSLKLFRTRT. Residues 263–283 form a helical membrane-spanning segment; the sequence is FSLGLAGSFAGRIGSGMLPFM. Over 284-285 the chain is Cytoplasmic; that stretch reads TP. The helical transmembrane segment at 286–306 threads the bilayer; that stretch reads VFLQIGLGFSPFHAGLMMIPM. Topologically, residues 307 to 341 are periplasmic; it reads VLGSMGMKRIVVQVVNRFGYRRVLVATTLGLSLVT. Residues 342–362 form a helical membrane-spanning segment; that stretch reads LLFMTTALLGWYYVLPFVLFL. At 363-395 the chain is on the cytoplasmic side; it reads QGMVNSTRFSSMNTLTLKDLPDNLASSGNSLLS. The chain crosses the membrane as a helical span at residues 396–416; sequence MIMQLSMSIGVTIAGLLLGLF. Over 417-430 the chain is Periplasmic; sequence GSQHVSVDSGTTQT. The chain crosses the membrane as a helical span at residues 431-451; sequence VFMYTWLSMAFIIALPAFIFA. Over 452–471 the chain is Cytoplasmic; that stretch reads RVPNDTHQNVAISRRKRSAQ.

This sequence belongs to the major facilitator superfamily. TCR/Tet family.

The protein resides in the cell inner membrane. The polypeptide is Putative multidrug resistance protein MdtD (Escherichia coli O127:H6 (strain E2348/69 / EPEC)).